We begin with the raw amino-acid sequence, 107 residues long: Nucleoid-associated protein GbCGDNIH1_0260 (107 aa).

The protein belongs to the YbaB/EbfC family. Homodimer.

It localises to the cytoplasm. The protein resides in the nucleoid. Functionally, binds to DNA and alters its conformation. May be involved in regulation of gene expression, nucleoid organization and DNA protection. This Granulibacter bethesdensis (strain ATCC BAA-1260 / CGDNIH1) protein is Nucleoid-associated protein GbCGDNIH1_0260.